The primary structure comprises 462 residues: Glycine--tRNA ligase (462 aa).

The substrate site is built by arginine 100 and glutamate 175. ATP contacts are provided by residues 207–209 (RNE), 217–222 (FRTREF), 291–292 (EL), and 335–338 (GADR). 222–226 (FEQME) serves as a coordination point for substrate. Substrate is bound at residue 331–335 (EPSLG).

It belongs to the class-II aminoacyl-tRNA synthetase family. Homodimer.

It is found in the cytoplasm. The enzyme catalyses tRNA(Gly) + glycine + ATP = glycyl-tRNA(Gly) + AMP + diphosphate. Functionally, catalyzes the attachment of glycine to tRNA(Gly). This is Glycine--tRNA ligase from Clostridium acetobutylicum (strain ATCC 824 / DSM 792 / JCM 1419 / IAM 19013 / LMG 5710 / NBRC 13948 / NRRL B-527 / VKM B-1787 / 2291 / W).